A 656-amino-acid polypeptide reads, in one-letter code: Kinesin-related protein SMY1 (656 aa).

In terms of domain architecture, Kinesin motor spans 27–364 (HIEVILRAIP…LEFGDSIRQI (338 aa)). Residue 114–121 (GPSFSGKS) participates in ATP binding. Position 583 is a phosphothreonine (T583).

It belongs to the TRAFAC class myosin-kinesin ATPase superfamily. Kinesin family.

Its subcellular location is the cytoplasm. It localises to the cytoskeleton. In terms of biological role, possible microtubule-based motor that can interact or substitute with myosin 2 (MYO2). The sequence is that of Kinesin-related protein SMY1 (SMY1) from Saccharomyces cerevisiae (strain ATCC 204508 / S288c) (Baker's yeast).